The chain runs to 100 residues: Putative septation protein SpoVG (100 aa).

The protein belongs to the SpoVG family.

Could be involved in septation. The polypeptide is Putative septation protein SpoVG (Staphylococcus haemolyticus (strain JCSC1435)).